Reading from the N-terminus, the 553-residue chain is Probable bifunctional riboflavin biosynthesis protein RIBA 2, chloroplastic (553 aa).

A chloroplast-targeting transit peptide spans 1-56; the sequence is MASISPTSSSVAALRGHPVQFVKGGAVSKEAKGSISFSPVANSNNANVKFTGLRVA. A DHBP synthase region spans residues 62–336; it reads DGAFPGDGYS…IADLIRYRRK (275 aa). The tract at residues 70-90 is disordered; it reads YSGNDNTVLPKSTSVRGQDYP. Positions 72 to 85 are enriched in polar residues; the sequence is GNDNTVLPKSTSVR. D-ribulose 5-phosphate is bound by residues 160-161, aspartate 165, 275-279, and glutamate 299; these read RE and RAGHT. Glutamate 161 contributes to the Mg(2+) binding site. Histidine 278 contributes to the Mg(2+) binding site. The interval 337 to 553 is GTP cyclohydrolase II; sequence RDRLVERSSV…TGSNGAKGEH (217 aa). Position 387–391 (387–391) interacts with GTP; that stretch reads RVHSE. Zn(2+)-binding residues include cysteine 392, cysteine 403, and cysteine 405. Residues glutamine 408, 431–433, and threonine 453 contribute to the GTP site; that span reads EGR. Catalysis depends on aspartate 465, which acts as the Proton acceptor; for GTP cyclohydrolase activity. The active-site Nucleophile; for GTP cyclohydrolase activity is arginine 467. 2 residues coordinate GTP: threonine 488 and lysine 493.

The protein in the N-terminal section; belongs to the DHBP synthase family. It in the C-terminal section; belongs to the GTP cyclohydrolase II family. Mg(2+) serves as cofactor. Requires Mn(2+) as cofactor. The cofactor is Zn(2+).

The protein resides in the plastid. Its subcellular location is the chloroplast. It catalyses the reaction D-ribulose 5-phosphate = (2S)-2-hydroxy-3-oxobutyl phosphate + formate + H(+). It carries out the reaction GTP + 4 H2O = 2,5-diamino-6-hydroxy-4-(5-phosphoribosylamino)-pyrimidine + formate + 2 phosphate + 3 H(+). It functions in the pathway cofactor biosynthesis; riboflavin biosynthesis; 2-hydroxy-3-oxobutyl phosphate from D-ribulose 5-phosphate: step 1/1. It participates in cofactor biosynthesis; riboflavin biosynthesis; 5-amino-6-(D-ribitylamino)uracil from GTP: step 1/4. Functionally, involved in riboflavin biosynthesis. Catalyzes both the conversion of D-ribulose 5-phosphate to formate and 3,4-dihydroxy-2-butanone 4-phosphate and the conversion of GTP to 2,5-diamino-6-ribosylamino-4(3H)-pyrimidinone 5'-phosphate (DARP), formate and pyrophosphate. This chain is Probable bifunctional riboflavin biosynthesis protein RIBA 2, chloroplastic (RIBA2), found in Oryza sativa subsp. japonica (Rice).